The primary structure comprises 351 residues: D-alanine--D-alanine ligase (351 aa).

In terms of domain architecture, ATP-grasp spans 146-340 (KEIMLYNNIK…YEDLCESIVL (195 aa)). Residue 173–226 (AFDYPMVVKPNSGGSSIGTRIVHDEAELAESLKDAYRFDDEIIVEEFITGREFS) coordinates ATP. The Mg(2+) site is built by aspartate 295, glutamate 307, and asparagine 309.

It belongs to the D-alanine--D-alanine ligase family. Requires Mg(2+) as cofactor. The cofactor is Mn(2+).

It is found in the cytoplasm. It catalyses the reaction 2 D-alanine + ATP = D-alanyl-D-alanine + ADP + phosphate + H(+). It participates in cell wall biogenesis; peptidoglycan biosynthesis. In terms of biological role, cell wall formation. This chain is D-alanine--D-alanine ligase, found in Pediococcus pentosaceus (strain ATCC 25745 / CCUG 21536 / LMG 10740 / 183-1w).